A 291-amino-acid chain; its full sequence is Bifunctional protein FolD (291 aa).

NADP(+) is bound by residues 168–170 (GRG), threonine 195, and isoleucine 236.

It belongs to the tetrahydrofolate dehydrogenase/cyclohydrolase family. In terms of assembly, homodimer.

It catalyses the reaction (6R)-5,10-methylene-5,6,7,8-tetrahydrofolate + NADP(+) = (6R)-5,10-methenyltetrahydrofolate + NADPH. The catalysed reaction is (6R)-5,10-methenyltetrahydrofolate + H2O = (6R)-10-formyltetrahydrofolate + H(+). Its pathway is one-carbon metabolism; tetrahydrofolate interconversion. In terms of biological role, catalyzes the oxidation of 5,10-methylenetetrahydrofolate to 5,10-methenyltetrahydrofolate and then the hydrolysis of 5,10-methenyltetrahydrofolate to 10-formyltetrahydrofolate. This is Bifunctional protein FolD from Bifidobacterium longum subsp. infantis (strain ATCC 15697 / DSM 20088 / JCM 1222 / NCTC 11817 / S12).